We begin with the raw amino-acid sequence, 258 residues long: Hydroxyacylglutathione hydrolase (258 aa).

The Zn(2+) site is built by His-54, His-56, Asp-58, His-59, His-113, Asp-138, and His-176.

The protein belongs to the metallo-beta-lactamase superfamily. Glyoxalase II family. In terms of assembly, monomer. Zn(2+) serves as cofactor.

The enzyme catalyses an S-(2-hydroxyacyl)glutathione + H2O = a 2-hydroxy carboxylate + glutathione + H(+). Its pathway is secondary metabolite metabolism; methylglyoxal degradation; (R)-lactate from methylglyoxal: step 2/2. Its function is as follows. Thiolesterase that catalyzes the hydrolysis of S-D-lactoyl-glutathione to form glutathione and D-lactic acid. This is Hydroxyacylglutathione hydrolase from Synechococcus sp. (strain ATCC 27144 / PCC 6301 / SAUG 1402/1) (Anacystis nidulans).